We begin with the raw amino-acid sequence, 665 residues long: DNA ligase (665 aa).

NAD(+) is bound by residues 32–36, 81–82, and Glu-110; these read DSEYD and SL. Lys-112 functions as the N6-AMP-lysine intermediate in the catalytic mechanism. NAD(+) contacts are provided by Arg-133, Glu-167, Lys-283, and Lys-307. Zn(2+) contacts are provided by Cys-401, Cys-404, Cys-419, and Cys-424. The BRCT domain maps to 586 to 665; it reads EGHPDFSGKT…AAFIEKQNGI (80 aa).

This sequence belongs to the NAD-dependent DNA ligase family. LigA subfamily. It depends on Mg(2+) as a cofactor. Requires Mn(2+) as cofactor.

It carries out the reaction NAD(+) + (deoxyribonucleotide)n-3'-hydroxyl + 5'-phospho-(deoxyribonucleotide)m = (deoxyribonucleotide)n+m + AMP + beta-nicotinamide D-nucleotide.. In terms of biological role, DNA ligase that catalyzes the formation of phosphodiester linkages between 5'-phosphoryl and 3'-hydroxyl groups in double-stranded DNA using NAD as a coenzyme and as the energy source for the reaction. It is essential for DNA replication and repair of damaged DNA. The polypeptide is DNA ligase (Staphylococcus epidermidis (strain ATCC 35984 / DSM 28319 / BCRC 17069 / CCUG 31568 / BM 3577 / RP62A)).